We begin with the raw amino-acid sequence, 772 residues long: Tubulin monoglycylase TTLL3 (772 aa).

The interval 50–81 is disordered; that stretch reads PTLLPPQKDLDSSAMGDSDTTEDEDEDEDEEF. Positions 68-81 are enriched in acidic residues; it reads DTTEDEDEDEDEEF. Residues 151 to 510 form the TTL domain; it reads ARNVLKLVVK…RMLDRNCDTG (360 aa). Residues Lys283, 289–290, 321–324, 334–336, and 378–379 contribute to the ATP site; these read RG, QKYI, KFD, and CN. Arg289 is a binding site for a protein. Ser381 is a binding site for L-glutamate. The Mg(2+) site is built by Asp456, Glu469, and Asn471. Residue Glu469 participates in ATP binding.

It depends on Mg(2+) as a cofactor. As to expression, expressed in brain, heart, kidney, testis, liver, lung, muscle, spleen, trachea and colon.

Its subcellular location is the cytoplasm. The protein resides in the cytoskeleton. It localises to the cell projection. The protein localises to the cilium. It is found in the cilium axoneme. Its subcellular location is the flagellum axoneme. The catalysed reaction is L-glutamyl-[protein] + glycine + ATP = glycyl-L-glutamyl-[protein] + ADP + phosphate + H(+). Its function is as follows. Monoglycylase which modifies alpha- and beta-tubulin, adding a single glycine on the gamma-carboxyl groups of specific glutamate residues to generate monoglycine side chains within the C-terminal tail of tubulin. Not involved in elongation step of the polyglycylation reaction. Preferentially glycylates a beta-tail peptide over the alpha-tail, although shifts its preference toward alpha-tail as beta-tail glutamylation increases. Competes with polyglutamylases for modification site on beta-tubulin substrate, thereby creating an anticorrelation between glycylation and glutamylation reactions. Together with TTLL8, mediates microtubule glycylation of primary and motile cilia, which is essential for their stability and maintenance. Involved in microtubule glycylation of primary cilia in colon which controls cell proliferation of epithelial cells and plays an essential role in colon cancer development. Together with TTLL8, glycylates sperm flagella which regulates axonemal dynein motor activity, thereby controlling flagellar beat, directional sperm swimming and male fertility. In Homo sapiens (Human), this protein is Tubulin monoglycylase TTLL3.